Here is a 104-residue protein sequence, read N- to C-terminus: Cell division protein FtsB (104 aa).

At 1–3 the chain is on the cytoplasmic side; the sequence is MGK. The chain crosses the membrane as a helical span at residues 4–21; sequence LTLLLLVLLGWLQYSLWL. The Periplasmic segment spans residues 22 to 104; the sequence is GKNGIHDYTR…NAQQGRPASQ (83 aa). Positions 33-62 form a coiled coil; sequence DEDVASQQGNNAKLKARNDRLFAEIDDLNG.

The protein belongs to the FtsB family. Part of a complex composed of FtsB, FtsL and FtsQ.

It localises to the cell inner membrane. In terms of biological role, essential cell division protein. May link together the upstream cell division proteins, which are predominantly cytoplasmic, with the downstream cell division proteins, which are predominantly periplasmic. The sequence is that of Cell division protein FtsB from Erwinia tasmaniensis (strain DSM 17950 / CFBP 7177 / CIP 109463 / NCPPB 4357 / Et1/99).